A 943-amino-acid chain; its full sequence is Valine--tRNA ligase (943 aa).

A 'HIGH' region motif is present at residues 45–55 (PNVTGTLHMGH). Residues 541–545 (KMSKS) carry the 'KMSKS' region motif. K544 lines the ATP pocket. Positions 875 to 934 (IDVAAERIRLAKEIEKLEKQISIAQGKLANEGFVARAPAAVIDQEKQRVADFTATLEQLK) form a coiled coil.

It belongs to the class-I aminoacyl-tRNA synthetase family. ValS type 1 subfamily. In terms of assembly, monomer.

It is found in the cytoplasm. The catalysed reaction is tRNA(Val) + L-valine + ATP = L-valyl-tRNA(Val) + AMP + diphosphate. Functionally, catalyzes the attachment of valine to tRNA(Val). As ValRS can inadvertently accommodate and process structurally similar amino acids such as threonine, to avoid such errors, it has a 'posttransfer' editing activity that hydrolyzes mischarged Thr-tRNA(Val) in a tRNA-dependent manner. This is Valine--tRNA ligase from Dechloromonas aromatica (strain RCB).